Here is a 491-residue protein sequence, read N- to C-terminus: Lysine--tRNA ligase 1 (491 aa).

E400 and E407 together coordinate Mg(2+).

This sequence belongs to the class-II aminoacyl-tRNA synthetase family. In terms of assembly, homodimer. Mg(2+) is required as a cofactor.

The protein localises to the cytoplasm. The enzyme catalyses tRNA(Lys) + L-lysine + ATP = L-lysyl-tRNA(Lys) + AMP + diphosphate. In Mycoplasmopsis pulmonis (strain UAB CTIP) (Mycoplasma pulmonis), this protein is Lysine--tRNA ligase 1.